Reading from the N-terminus, the 105-residue chain is MIVTTTNTIEGKEIEEYLGIVAGEVILGANVVRDFLASITDIIGGRSGTYESKLAEGREMAIKEMVNKARSLGANAVIGVDLDFETLRDGMMMCIATGTAVRLKS.

It belongs to the UPF0145 family.

The protein is UPF0145 protein GK1405 of Geobacillus kaustophilus (strain HTA426).